Here is a 261-residue protein sequence, read N- to C-terminus: Succinate dehydrogenase [ubiquinone] iron-sulfur subunit, mitochondrial (261 aa).

Residues 31 to 122 (FKIYRWNPDT…DVKIYPLPHM (92 aa)) enclose the 2Fe-2S ferredoxin-type domain. The [2Fe-2S] cluster site is built by Cys82, Cys87, Cys90, and Cys102. The 4Fe-4S ferredoxin-type domain occupies 164–194 (DRKKLDGLYECILCACCSTACPSYWWNNEQY). Residues Cys174, Cys177, and Cys180 each coordinate [4Fe-4S] cluster. [3Fe-4S] cluster is bound at residue Cys184. Trp189 is an a ubiquinone binding site. Positions 231 and 237 each coordinate [3Fe-4S] cluster. Cys241 provides a ligand contact to [4Fe-4S] cluster.

Belongs to the succinate dehydrogenase/fumarate reductase iron-sulfur protein family. As to quaternary structure, component of complex II composed of four subunits: a flavoprotein (FP), an iron-sulfur protein (IP), and a cytochrome b composed of a large and a small subunit. [2Fe-2S] cluster serves as cofactor. It depends on [3Fe-4S] cluster as a cofactor. [4Fe-4S] cluster is required as a cofactor.

The protein localises to the mitochondrion inner membrane. The enzyme catalyses a quinone + succinate = fumarate + a quinol. It functions in the pathway carbohydrate metabolism; tricarboxylic acid cycle; fumarate from succinate (eukaryal route): step 1/1. Iron-sulfur protein (IP) subunit of succinate dehydrogenase (SDH) that is involved in complex II of the mitochondrial electron transport chain and is responsible for transferring electrons from succinate to ubiquinone (coenzyme Q). The protein is Succinate dehydrogenase [ubiquinone] iron-sulfur subunit, mitochondrial (SDH2) of Eremothecium gossypii (strain ATCC 10895 / CBS 109.51 / FGSC 9923 / NRRL Y-1056) (Yeast).